The sequence spans 206 residues: Large ribosomal subunit protein uL3 (206 aa).

The segment at 127 to 151 (SGGPSSHGSKFHRHLGGTGQATTPA) is disordered.

It belongs to the universal ribosomal protein uL3 family. As to quaternary structure, part of the 50S ribosomal subunit. Forms a cluster with proteins L14 and L19.

Functionally, one of the primary rRNA binding proteins, it binds directly near the 3'-end of the 23S rRNA, where it nucleates assembly of the 50S subunit. This is Large ribosomal subunit protein uL3 from Borreliella burgdorferi (strain ATCC 35210 / DSM 4680 / CIP 102532 / B31) (Borrelia burgdorferi).